Consider the following 747-residue polypeptide: DNA damage checkpoint protein LCD1 (747 aa).

Phosphoserine is present on residues serine 10, serine 11, and serine 76. Residues 62-139 are a coiled coil; it reads NQLVNQLNKA…MEARGKSKRE (78 aa). Residues 145–180 are disordered; that stretch reads KPPSTTLSTNTNTITPDSSSVAIEAKPQSPQSKKRK. Positions 146–160 are enriched in low complexity; sequence PPSTTLSTNTNTITP.

As to quaternary structure, forms a complex with MEC1. In terms of processing, phosphorylated by MEC1 in a cell cycle dependent manner and in response to DNA damage.

It is found in the cytoplasm. It localises to the nucleus. Functionally, forms a complex with the serine/threonine kinase MEC1 which activates checkpoint signaling upon genotoxic stresses. The MEC1-LCD1 complex is recruited by the single-strand-binding protein complex RPA to DNA lesions in order to initiate the DNA repair by homologous recombination, after the MRX-complex and TEL1 are displaced. Required for the recruitment of MEC1 to DNA lesions, the activation of CHK1 and RAD53 kinases and phosphorylation of RAD9 in response to DNA damage. Required for cell growth and meiotic recombination. The protein is DNA damage checkpoint protein LCD1 (LCD1) of Saccharomyces cerevisiae (strain ATCC 204508 / S288c) (Baker's yeast).